Here is a 593-residue protein sequence, read N- to C-terminus: Histone-arginine methyltransferase CARMER (593 aa).

In terms of domain architecture, SAM-dependent MTase PRMT-type spans 122-429 (ASQYFQFYGY…QRQSYDVEMD (308 aa)). Positions 135, 144, 168, 190, 219, and 247 each coordinate S-adenosyl-L-methionine. The residue at position 482 (arginine 482) is an Asymmetric dimethylarginine; by autocatalysis. Positions 521 to 540 (LISSTGRQQSQQQTTPAQPL) are disordered. Positions 523–535 (SSTGRQQSQQQTT) are enriched in low complexity.

It belongs to the class I-like SAM-binding methyltransferase superfamily. Protein arginine N-methyltransferase family. As to quaternary structure, homodimer. In terms of processing, the dimethylated protein is the major form.

The protein localises to the cytoplasm. The protein resides in the nucleus. It carries out the reaction L-arginyl-[protein] + 2 S-adenosyl-L-methionine = N(omega),N(omega)-dimethyl-L-arginyl-[protein] + 2 S-adenosyl-L-homocysteine + 2 H(+). Functionally, methylates (mono- and asymmetric dimethylation) the guanidino nitrogens of arginyl residues in proteins. May methylate histone H3 at 'Arg-17' and activate transcription via chromatin remodeling. This chain is Histone-arginine methyltransferase CARMER, found in Aedes aegypti (Yellowfever mosquito).